The primary structure comprises 629 residues: uncharacterized protein (629 aa).

The Proton acceptor role is filled by H562.

This sequence belongs to the GMC oxidoreductase family. FAD is required as a cofactor.

This is an uncharacterized protein from Mycobacterium tuberculosis (strain CDC 1551 / Oshkosh).